The sequence spans 430 residues: Adenylosuccinate synthetase (430 aa).

GTP is bound by residues 13-19 (GDEGKGK) and 41-43 (GHT). Aspartate 14 (proton acceptor) is an active-site residue. Residues aspartate 14 and glycine 41 each coordinate Mg(2+). IMP is bound by residues 14-17 (DEGK), 39-42 (NAGH), threonine 130, arginine 144, glutamine 225, threonine 240, and arginine 304. Histidine 42 acts as the Proton donor in catalysis. Residue 300–306 (ATTGRAR) participates in substrate binding. Residues arginine 306, 332–334 (KLD), and 414–416 (STG) contribute to the GTP site.

This sequence belongs to the adenylosuccinate synthetase family. Homodimer. Mg(2+) serves as cofactor.

It is found in the cytoplasm. It carries out the reaction IMP + L-aspartate + GTP = N(6)-(1,2-dicarboxyethyl)-AMP + GDP + phosphate + 2 H(+). Its pathway is purine metabolism; AMP biosynthesis via de novo pathway; AMP from IMP: step 1/2. Plays an important role in the de novo pathway of purine nucleotide biosynthesis. Catalyzes the first committed step in the biosynthesis of AMP from IMP. The chain is Adenylosuccinate synthetase from Pseudomonas fluorescens (strain ATCC BAA-477 / NRRL B-23932 / Pf-5).